A 128-amino-acid polypeptide reads, in one-letter code: Large ribosomal subunit protein bL12 (128 aa).

Belongs to the bacterial ribosomal protein bL12 family. In terms of assembly, homodimer. Part of the ribosomal stalk of the 50S ribosomal subunit. Forms a multimeric L10(L12)X complex, where L10 forms an elongated spine to which 2 to 4 L12 dimers bind in a sequential fashion. Binds GTP-bound translation factors.

Functionally, forms part of the ribosomal stalk which helps the ribosome interact with GTP-bound translation factors. Is thus essential for accurate translation. This chain is Large ribosomal subunit protein bL12, found in Kosmotoga olearia (strain ATCC BAA-1733 / DSM 21960 / TBF 19.5.1).